The following is a 616-amino-acid chain: Homeodomain-interacting protein kinase 4 (616 aa).

In terms of domain architecture, Protein kinase spans 11–347; sequence YDIIEVLGKG…PSAALRHPFV (337 aa). ATP contacts are provided by residues 17–25 and Lys-40; that span reads LGKGTFGEV. Asp-136 (proton acceptor) is an active-site residue. The tract at residues 486–616 is disordered; sequence HKARKPPAGS…SFLQHVTGHH (131 aa). Positions 496–511 are enriched in polar residues; sequence KSDSNFSNLIRLSQVS. The residue at position 511 (Ser-511) is a Phosphoserine.

This sequence belongs to the protein kinase superfamily. CMGC Ser/Thr protein kinase family. HIPK subfamily. In terms of processing, autophosphorylated.

The protein localises to the cytoplasm. It carries out the reaction L-seryl-[protein] + ATP = O-phospho-L-seryl-[protein] + ADP + H(+). It catalyses the reaction L-threonyl-[protein] + ATP = O-phospho-L-threonyl-[protein] + ADP + H(+). In terms of biological role, protein kinase that phosphorylates human TP53 at Ser-9, and thus induces TP53 repression of BIRC5 promoter. May act as a corepressor of transcription factors (Potential). The chain is Homeodomain-interacting protein kinase 4 (HIPK4) from Homo sapiens (Human).